A 291-amino-acid chain; its full sequence is MEILKNHIVSDKLRSSNKCTLLTLNSKFNVIISLEKSPLDKIRELFKSILVDGFTDHNHYKLTAYFAEIVDTDTVINVIIDTVQSKLDSIREALDTNEINLSMYIQIWESYHDFFKNMHLIIKNYQNYLMNKNVTVGKLSLSILSIIEIGMFYNSVIKNNPNDILSSLSKHIYSIDKNNIDQLINYIDSIRSFTLVSGVIDIDKIKLFKIIKNIINSPEIINTLCAYLDTLIRSVSFEKFTKNTEYKTVSIDSIKNQTIRKIYKITIILAAYSDRNVLNLCYSYILTSSCN.

This is an uncharacterized protein from Acanthamoeba polyphaga mimivirus (APMV).